Here is a 2030-residue protein sequence, read N- to C-terminus: Dedicator of cytokinesis protein 3 (2030 aa).

The region spanning 6–67 (EEEKYGVVIC…PANYIHLKKA (62 aa)) is the SH3 domain. The region spanning 421 to 599 (RNDLYLTLEK…ESFFISTQLS (179 aa)) is the C2 DOCK-type domain. Residues 1228–1635 (KSEINKEEMY…LYHEFPGLDK (408 aa)) enclose the DOCKER domain. Disordered stretches follow at residues 1641–1662 (SGTS…PESI), 1734–1771 (SSSQ…SLPD), 1849–1927 (DTPP…ADED), and 1951–2030 (QPCR…RGEQ). Position 1658 is a phosphoserine (S1658). The span at 1734 to 1754 (SSSQASPSSSSLSSTHSAPSQ) shows a compositional bias: low complexity. Residues 1755–1765 (MITSAPSSARG) show a composition bias toward polar residues. The span at 1880-1902 (GSNSTLSGSASSGVSSLSESNFG) shows a compositional bias: low complexity. Residues 1967–1977 (PMDPPALPPKP) are compositionally biased toward pro residues. The SH3-binding signature appears at 1970 to 1976 (PPALPPK). Basic and acidic residues-rich tracts occupy residues 1984-2001 (ALEH…ERPR) and 2014-2030 (AKEE…RGEQ).

The protein belongs to the DOCK family. As to quaternary structure, interacts with presenilin proteins PSEN1 and PSEN2. Interacts with CRK. In terms of tissue distribution, in normal brains, it is localized in the neuropil, and occasionally in the pyramidal cells, while in Alzheimer disease brains, it is associated with neurofibrillary tangles.

It is found in the cytoplasm. Its function is as follows. Potential guanine nucleotide exchange factor (GEF). GEF proteins activate some small GTPases by exchanging bound GDP for free GTP. Its interaction with presenilin proteins as well as its ability to stimulate Tau/MAPT phosphorylation suggest that it may be involved in Alzheimer disease. Ectopic expression in nerve cells decreases the secretion of amyloid-beta APBA1 protein and lowers the rate of cell-substratum adhesion, suggesting that it may affect the function of some small GTPase involved in the regulation of actin cytoskeleton or cell adhesion receptors. The protein is Dedicator of cytokinesis protein 3 (DOCK3) of Homo sapiens (Human).